Here is a 284-residue protein sequence, read N- to C-terminus: MEMO1 family protein SSO0066 (284 aa).

The protein belongs to the MEMO1 family.

The sequence is that of MEMO1 family protein SSO0066 from Saccharolobus solfataricus (strain ATCC 35092 / DSM 1617 / JCM 11322 / P2) (Sulfolobus solfataricus).